The chain runs to 586 residues: MRTKYCGNIRISHVNKKVKLCGWVHKVRNLGQFIFVDMRDYTGLVQVIFELKNYKIFKKALNLRNEFCIQVFGTVQKREKKNQNIKIRTGEIEILANVLNILNTSKSLPLNFTQENNDDSRLKYRYLDLRSFDILENLKIRNKITYLIRNFMTKKNFLDIETPILTKSTPEGARDYLVPSRNHYGKFYALPQSPQLFKQILMISGIDRYYQIVKCFRDEDLRSDRQPEFTQIDIEVSFMSAKKIRNLVENLIKKLWLEIRNINLKKFPQISFHEAMKKYGSDKPDLRNPIEIIDVSNIFKDKKFISFFNLNPQKNNRIALLCISKGAHLSRKKIDDYTKYVQRFDAKKLFYMKIKECKLGCLGIHSSIKNILDEIILKEIIEKSQSKNGDILFLIADQEHIVNKSLGMLRLKIGIDLNITKKNRWEPLWIVNFPMFDKDIQGNLSSVHHPFTAVKNMDREILKNSPDLAISDSYDLIINGYEIGGGSVRIHDVNMQKQVFDIIGIKKSMQNEKFGFLIEALKYGAPPHAGIALGLDRIVMLLTNSKNIRDVIAFPKTTSATCLMTNSPSTVDNLLLQELAIKHLKK.

Residue Glu171 coordinates L-aspartate. Residues 195-198 (QLFK) form an aspartate region. L-aspartate is bound at residue Arg217. ATP contacts are provided by residues 217–219 (RDE) and Gln226. His448 is an L-aspartate binding site. ATP is bound at residue Glu482. An L-aspartate-binding site is contributed by Arg489. 534–537 (GLDR) lines the ATP pocket.

Belongs to the class-II aminoacyl-tRNA synthetase family. Type 1 subfamily. Homodimer.

The protein localises to the cytoplasm. The catalysed reaction is tRNA(Asp) + L-aspartate + ATP = L-aspartyl-tRNA(Asp) + AMP + diphosphate. Its function is as follows. Catalyzes the attachment of L-aspartate to tRNA(Asp) in a two-step reaction: L-aspartate is first activated by ATP to form Asp-AMP and then transferred to the acceptor end of tRNA(Asp). The chain is Aspartate--tRNA ligase from Buchnera aphidicola subsp. Acyrthosiphon pisum (strain APS) (Acyrthosiphon pisum symbiotic bacterium).